A 104-amino-acid polypeptide reads, in one-letter code: Replication restart protein PriB (104 aa).

Residues 2 to 101 enclose the SSB domain; that stretch reads TNRLVLSGTV…LHAEQIELID (100 aa). Cysteines 48 and 80 form a disulfide. The L45 loop motif lies at 82–89; the sequence is KAKNGLSK.

It belongs to the PriB family. In terms of assembly, homodimer. Primosome assembly occurs via a 'hand-off' mechanism. PriA binds to replication forks, subsequently PriB then DnaT bind; DnaT then displaces ssDNA to generate the helicase loading substrate, which allows DnaC to load helicase DnaB onto the fork. ssDNA is displaced from the PriB-ssDNA complex by DnaT. In a PriA-PriB-replication fork structure, movement of the PriA CRR domain exposes a surface to which PriB binds and contacts ssDNA emerging from the PriA pore. Binds PriA; binding is improved in the presence of ssDNA. Weakly binds DnaT; binding is improved in the presence of ssDNA; as DnaT levels increase PriB dissociates from ssDNA. Component of the replication restart primosome, which is composed of PriA, PriB, PriC, DnaB and DnaT; DnaG primase associates transiently with this complex. Component of the preprimosomal complex composed of one monomer of PriC and DnaT, two monomers of PriA, two dimers of PriB and one hexamer of DnaB. In terms of processing, an intersubunit disulfide bond is seen in some crystals.

In terms of biological role, involved in the restart of stalled replication forks, which reloads the replicative helicase (DnaB) on sites other than the origin of replication; the PriA-PriB pathway is the major replication restart pathway. There are several restart pathways, the PriA-PriB pathway is subdivided into 2 distinct pathways. priB and priC have redundant roles in the cell. During primosome assembly it facilitates complex formation between PriA and DnaT on DNA; stabilizes PriA on DNA, presumably by preventing or inhibiting PriA DNA translocation activity. Forms a branched DNA-PriA-PriB complex when the lagging strand is single-stranded (ss)DNA. Binds ssDNA in the presence and absence of ssDNA DNA-binding protein (SSB), does not bind branched structures. DNA binding, forming spiral filaments on ssDNA, is cooperative. Stimulates the helicase activity of PriA. The homodimer binds 12 nucleotides of ssDNA. Binds homo-pyrimidine tracts better than homo-purine tracts. Its function is as follows. Genetic interactions among priB, dam, lexA, nagC, polA, rdgB, rdgB, rep and uup link the PriA-PriB replication restart pathway to DNA double-strand break repair. In Escherichia coli (strain K12), this protein is Replication restart protein PriB.